The primary structure comprises 1150 residues: Protogenin (1150 aa).

A signal peptide spans 1–35; it reads MAPPLRPLARLRPPGMLLRALLLLLLLSPLPGVWC. Ig-like domains are found at residues 36–130, 135–222, 235–322, and 327–411; these read FSEL…AHLA, SAFE…ASLT, PTII…ATLT, and PSFV…ARLT. Topologically, residues 36-949 are extracellular; the sequence is FSELSFVKEP…YYHLDQKSMT (914 aa). 4 disulfides stabilise this stretch: Cys-60-Cys-113, Cys-156-Cys-205, Cys-256-Cys-304, and Cys-348-Cys-395. Residue Asn-90 is glycosylated (N-linked (GlcNAc...) asparagine). 5 Fibronectin type-III domains span residues 421-515, 517-613, 618-717, 724-817, and 822-917; these read APYN…TLED, PLRP…TPKA, APKS…VRDR, PPHH…TLPE, and PPVG…VLPK. The N-linked (GlcNAc...) asparagine glycan is linked to Asn-488. N-linked (GlcNAc...) asparagine glycosylation is present at Asn-630. Residues 950-970 form a helical membrane-spanning segment; the sequence is GIAVGVGIALTCILICVLILI. Residues 971 to 1150 lie on the Cytoplasmic side of the membrane; sequence YRSKARKSSA…SVISTTPPNL (180 aa). 2 disordered regions span residues 981–1002 and 1086–1150; these read SKTAQNGTQQLPRTSASLASGN and ISDE…PPNL. Polar residues-rich tracts occupy residues 983 to 1000 and 1092 to 1102; these read TAQNGTQQLPRTSASLAS and PSSPGQTTSFS. A compositionally biased stretch (basic and acidic residues) spans 1110 to 1138; it reads DTEHSANSEGSHETGDSGRFSHESNDEIH. Polar residues predominate over residues 1141-1150; that stretch reads SVISTTPPNL.

Belongs to the immunoglobulin superfamily. DCC family.

The protein localises to the membrane. Its function is as follows. May play a role in anteroposterior axis elongation. The chain is Protogenin from Homo sapiens (Human).